Consider the following 133-residue polypeptide: Ribosome-binding factor A (133 aa).

It belongs to the RbfA family. Monomer. Binds 30S ribosomal subunits, but not 50S ribosomal subunits or 70S ribosomes.

It is found in the cytoplasm. One of several proteins that assist in the late maturation steps of the functional core of the 30S ribosomal subunit. Associates with free 30S ribosomal subunits (but not with 30S subunits that are part of 70S ribosomes or polysomes). Required for efficient processing of 16S rRNA. May interact with the 5'-terminal helix region of 16S rRNA. The protein is Ribosome-binding factor A of Psychromonas ingrahamii (strain DSM 17664 / CCUG 51855 / 37).